A 220-amino-acid polypeptide reads, in one-letter code: Large ribosomal subunit protein uL16 (220 aa).

It belongs to the universal ribosomal protein uL16 family. In terms of assembly, component of the large ribosomal subunit. Mature ribosomes consist of a small (40S) and a large (60S) subunit. The 40S subunit contains about 32 different proteins and 1 molecule of RNA (18S). The 60S subunit contains 45 different proteins and 3 molecules of RNA (25S, 5.8S and 5S).

The protein resides in the cytoplasm. Its function is as follows. Component of the ribosome, a large ribonucleoprotein complex responsible for the synthesis of proteins in the cell. The small ribosomal subunit (SSU) binds messenger RNAs (mRNAs) and translates the encoded message by selecting cognate aminoacyl-transfer RNA (tRNA) molecules. The large subunit (LSU) contains the ribosomal catalytic site termed the peptidyl transferase center (PTC), which catalyzes the formation of peptide bonds, thereby polymerizing the amino acids delivered by tRNAs into a polypeptide chain. The nascent polypeptides leave the ribosome through a tunnel in the LSU and interact with protein factors that function in enzymatic processing, targeting, and the membrane insertion of nascent chains at the exit of the ribosomal tunnel. The polypeptide is Large ribosomal subunit protein uL16 (Candida albicans (strain SC5314 / ATCC MYA-2876) (Yeast)).